Consider the following 383-residue polypeptide: MDALRLANTGLAVDIFKKLCEKSATDNFVFSPICISTSLALLHRGSQGNTASELQKVLHFEKVKDSDFGFQLLSSDISKVISIYSLKLLKRVYVDNSIECKKDFINSTKKPYPLELETIDIKSRPEEARCQINSSVKELTDGNFEAVLNEGSCDEKTKIIMLGAASFKGNWVYKFNESETKEMDFHINKKETKPVQMMHLEARLSIGYINELKTMVLELPFTSKHLSILILLPKDIEDDSTGLKKLEQDMTFEKYAQWTNPSMMANSKVKVYLPKFKLESSFDLKDMLKSLGINDAFNEEASDFSGMTESKDTSISQAIHKACIEVNEDGTEAPDVTMERRLMNKEEFCADRPFIFILRHNKTRTIIMFGRYCGPCEASSTAD.

N-linked (GlcNAc...) asparagine glycans are attached at residues N106, N133, N176, and N361.

It belongs to the serpin family. Ov-serpin subfamily.

The protein localises to the secreted. It localises to the extracellular space. May not exhibit serine protease inhibitory activity. In Xenopus laevis (African clawed frog), this protein is Serpin B5 (serpinb5).